A 115-amino-acid polypeptide reads, in one-letter code: Large ribosomal subunit protein bL19 (115 aa).

This sequence belongs to the bacterial ribosomal protein bL19 family.

In terms of biological role, this protein is located at the 30S-50S ribosomal subunit interface and may play a role in the structure and function of the aminoacyl-tRNA binding site. The chain is Large ribosomal subunit protein bL19 from Streptococcus suis (strain 98HAH33).